A 164-amino-acid polypeptide reads, in one-letter code: Glutaredoxin-2, mitochondrial (164 aa).

Residues 1–19 (MIWRRAALAGTRLVWSRSG) constitute a mitochondrion transit peptide. Phosphoserine is present on S20. Residues 57 to 157 (VNQIQETISD…PLVHQCYLKK (101 aa)) enclose the Glutaredoxin domain. C68 contributes to the [2Fe-2S] cluster binding site. K74 is a binding site for glutathione. Residue C77 is modified to S-glutathionyl cysteine; alternate. Cysteines 77 and 80 form a disulfide. Glutathione-binding residues include Q109 and V121. C153 lines the [2Fe-2S] cluster pocket.

This sequence belongs to the glutaredoxin family. As to quaternary structure, monomer; active form. Homodimer; inactive form. The homodimer is probably linked by 1 2Fe-2S cluster. As to expression, widely expressed. Expressed in brain, heart, skeletal muscle, colon, thymus, spleen, kidney, liver, small intestine, placenta and lung. Not expressed in peripheral blood leukocytes.

The protein localises to the mitochondrion. It is found in the nucleus. Its activity is regulated as follows. The 2Fe-2S present in the homodimer leads to inactivation of the enzyme. The 2Fe-2S may serve as a redox sensor: the presence of one-electron oxidants or reductants leading to the loss of the 2Fe-2S cluster, subsequent monomerization and activation of the enzyme. Unlike other glutaredoxins, it is not inhibited by oxidation of structural Cys residues. In terms of biological role, glutathione-dependent oxidoreductase that facilitates the maintenance of mitochondrial redox homeostasis upon induction of apoptosis by oxidative stress. Involved in response to hydrogen peroxide and regulation of apoptosis caused by oxidative stress. Acts as a very efficient catalyst of monothiol reactions because of its high affinity for protein glutathione-mixed disulfides. Can receive electrons not only from glutathione (GSH), but also from thioredoxin reductase supporting both monothiol and dithiol reactions. Efficiently catalyzes both glutathionylation and deglutathionylation of mitochondrial complex I, which in turn regulates the superoxide production by the complex. Overexpression decreases the susceptibility to apoptosis and prevents loss of cardiolipin and cytochrome c release. This Homo sapiens (Human) protein is Glutaredoxin-2, mitochondrial (GLRX2).